A 464-amino-acid chain; its full sequence is Protein FAM90A11 (464 aa).

Disordered stretches follow at residues M1–L42, P70–A389, and H415–P437. 2 stretches are compositionally biased toward basic and acidic residues: residues G74 to V89 and N97 to R114. A compositionally biased stretch (low complexity) spans L180–L197. The segment covering G341–V356 has biased composition (polar residues).

It belongs to the FAM90 family.

This is Protein FAM90A11 from Homo sapiens (Human).